The following is a 213-amino-acid chain: Thymidylate kinase (213 aa).

Residue 10–17 (GLEGAGKT) participates in ATP binding.

Belongs to the thymidylate kinase family.

The enzyme catalyses dTMP + ATP = dTDP + ADP. Phosphorylation of dTMP to form dTDP in both de novo and salvage pathways of dTTP synthesis. The protein is Thymidylate kinase of Escherichia coli O6:H1 (strain CFT073 / ATCC 700928 / UPEC).